The sequence spans 691 residues: Alpha-1,4-glucan:maltose-1-phosphate maltosyltransferase (691 aa).

Alpha-maltose 1-phosphate is bound by residues lysine 280, glutamine 341, and aspartate 376. The Nucleophile role is filled by aspartate 411. Asparagine 412 is a binding site for alpha-maltose 1-phosphate. Catalysis depends on glutamate 440, which acts as the Proton donor. 550–551 lines the alpha-maltose 1-phosphate pocket; sequence KY.

It belongs to the glycosyl hydrolase 13 family. GlgE subfamily. As to quaternary structure, homodimer.

The enzyme catalyses alpha-maltose 1-phosphate + [(1-&gt;4)-alpha-D-glucosyl](n) = [(1-&gt;4)-alpha-D-glucosyl](n+2) + phosphate. Functionally, maltosyltransferase that uses maltose 1-phosphate (M1P) as the sugar donor to elongate linear or branched alpha-(1-&gt;4)-glucans. Is involved in a branched alpha-glucan biosynthetic pathway from trehalose, together with TreS, Mak and GlgB. The chain is Alpha-1,4-glucan:maltose-1-phosphate maltosyltransferase from Arcanobacterium haemolyticum (strain ATCC 9345 / DSM 20595 / CCM 5947 / CCUG 17215 / LMG 16163 / NBRC 15585 / NCTC 8452 / 11018).